The following is a 312-amino-acid chain: Mas-related G-protein coupled receptor member B3 (312 aa).

Residues 1-31 lie on the Extracellular side of the membrane; sequence MALRTSLITTTAPDKTSLPISICIIKFQVMN. A helical transmembrane segment spans residues 32-52; the sequence is LLSITISPVGMVLNIIVLWFL. Topologically, residues 53–67 are cytoplasmic; that stretch reads GFQICRNAFSAYILN. A helical transmembrane segment spans residues 68–88; the sequence is LAVADFLFLCSHSIFSFLIVC. Topologically, residues 89-106 are extracellular; that stretch reads KLHYFLFYIRQLLDTVTM. Residues 107–127 form a helical membrane-spanning segment; sequence FAYVFGLSITTIISIECCLSI. The Cytoplasmic segment spans residues 128–140; sequence MWPIWYHCQRPRH. The helical transmembrane segment at 141-161 threads the bilayer; that stretch reads TSAVICVLLWALSLLFPALQM. At 162–180 the chain is on the extracellular side; the sequence is EKCSVLFNTFEYSWCGIIN. A helical transmembrane segment spans residues 181 to 201; sequence IISGAWLVVLFVVLCGFSLIL. At 202 to 220 the chain is on the cytoplasmic side; the sequence is LLRISCGSQQIPVTRLNVT. Residues 221–241 form a helical membrane-spanning segment; it reads IALRVLLLLIFGIPFGIFWIV. The Extracellular segment spans residues 242-259; it reads DKWNEENFFVRACGFSHH. A helical transmembrane segment spans residues 260 to 280; it reads ILYVYCINICVNATIYFLVGS. Residues 281 to 312 lie on the Cytoplasmic side of the membrane; sequence IRHGKFQKMTLKLILQRAIQGTPEEEGGERGP.

The protein belongs to the G-protein coupled receptor 1 family. Mas subfamily.

The protein resides in the membrane. Its function is as follows. Orphan receptor. Probably involved in the function of nociceptive neurons. May regulate nociceptor function and/or development, including the sensation or modulation of pain. The sequence is that of Mas-related G-protein coupled receptor member B3 (Mrgprb3) from Mus musculus (Mouse).